Consider the following 481-residue polypeptide: Glutamate--tRNA ligase (481 aa).

The short motif at 11 to 21 (PSPTGLLHIGN) is the 'HIGH' region element. The 'KMSKS' region signature appears at 255 to 259 (KLSKR). Lys258 contacts ATP.

The protein belongs to the class-I aminoacyl-tRNA synthetase family. Glutamate--tRNA ligase type 1 subfamily. In terms of assembly, monomer.

Its subcellular location is the cytoplasm. The catalysed reaction is tRNA(Glu) + L-glutamate + ATP = L-glutamyl-tRNA(Glu) + AMP + diphosphate. Functionally, catalyzes the attachment of glutamate to tRNA(Glu) in a two-step reaction: glutamate is first activated by ATP to form Glu-AMP and then transferred to the acceptor end of tRNA(Glu). The chain is Glutamate--tRNA ligase from Streptococcus pyogenes serotype M6 (strain ATCC BAA-946 / MGAS10394).